The sequence spans 239 residues: Ribonuclease PH (239 aa).

Residues arginine 86 and 124–126 contribute to the phosphate site; that span reads GTR.

This sequence belongs to the RNase PH family. As to quaternary structure, homohexameric ring arranged as a trimer of dimers.

The catalysed reaction is tRNA(n+1) + phosphate = tRNA(n) + a ribonucleoside 5'-diphosphate. In terms of biological role, phosphorolytic 3'-5' exoribonuclease that plays an important role in tRNA 3'-end maturation. Removes nucleotide residues following the 3'-CCA terminus of tRNAs; can also add nucleotides to the ends of RNA molecules by using nucleoside diphosphates as substrates, but this may not be physiologically important. Probably plays a role in initiation of 16S rRNA degradation (leading to ribosome degradation) during starvation. This chain is Ribonuclease PH, found in Rickettsia africae (strain ESF-5).